The following is a 258-amino-acid chain: Ribosomal RNA small subunit methyltransferase J (258 aa).

S-adenosyl-L-methionine is bound by residues 104–105, 120–121, and Asp175; these read RD and ER.

This sequence belongs to the methyltransferase superfamily. RsmJ family.

It localises to the cytoplasm. The catalysed reaction is guanosine(1516) in 16S rRNA + S-adenosyl-L-methionine = N(2)-methylguanosine(1516) in 16S rRNA + S-adenosyl-L-homocysteine + H(+). In terms of biological role, specifically methylates the guanosine in position 1516 of 16S rRNA. This chain is Ribosomal RNA small subunit methyltransferase J, found in Chromobacterium violaceum (strain ATCC 12472 / DSM 30191 / JCM 1249 / CCUG 213 / NBRC 12614 / NCIMB 9131 / NCTC 9757 / MK).